We begin with the raw amino-acid sequence, 244 residues long: Electron transfer flavoprotein beta subunit lysine methyltransferase homolog (244 aa).

This sequence belongs to the methyltransferase superfamily. ETFBKMT family.

Functionally, probable methyltransferase. The sequence is that of Electron transfer flavoprotein beta subunit lysine methyltransferase homolog from Caenorhabditis elegans.